A 441-amino-acid chain; its full sequence is MVMTPREIVQELDKHIIGQDDAKRAVAIALRNRWRRMKIKDPVLRNEIMPKNILMIGPTGVGKTEIARRLANLAKAPFIKVEATKFTEVGYVGRDVDSIIRDLTDMAIKQEREFAMKKVEHLAEDAAEERILDVLLPPARGTLTPGEKNTTARQVFRKQLREGELNDNEIEIEVAATPVGIEIMAPPGMEEMTSQLQSMFQQVGSYRTKTRKMTVAKAMKILREEEAAKLINEEDIKLKAIESVEQNGIVFIDELDKIAKRSDTVSGGDVSREGVQRDLLPLVEGTTVSTKYGMVKSDHILFIASGAFHVAKPSDLIAELQGRLPIRVELSALSVEDFVRILTEPSASLTLQYSALMETEGLTLTFDETGIRRIAEVAWQVNERTENIGARRLYTVMERLLEVVSFEATDKAGETVHVDKAYVDKNLGQLIADEDLARYIL.

Residues I17, 60-65 (GVGKTE), D253, E319, and R391 each bind ATP.

It belongs to the ClpX chaperone family. HslU subfamily. As to quaternary structure, a double ring-shaped homohexamer of HslV is capped on each side by a ring-shaped HslU homohexamer. The assembly of the HslU/HslV complex is dependent on binding of ATP.

Its subcellular location is the cytoplasm. Functionally, ATPase subunit of a proteasome-like degradation complex; this subunit has chaperone activity. The binding of ATP and its subsequent hydrolysis by HslU are essential for unfolding of protein substrates subsequently hydrolyzed by HslV. HslU recognizes the N-terminal part of its protein substrates and unfolds these before they are guided to HslV for hydrolysis. The polypeptide is ATP-dependent protease ATPase subunit HslU (Legionella pneumophila (strain Paris)).